Consider the following 306-residue polypeptide: MKPTADILASIIEEVRPLTSKGIVADYIPALAKVPSDKLGIAVFTNQGEVITAGDAQEGFSIQSISKVLSLTLAMGLYQPDELWSRVGKEPSGQAFNSLIQLEMEQGIPRNPFINAGAIVVCDMLQSRLSAPRQRLLEFVRQLSGEPQIAYDKVVAASEMMHSDRNAAIAYLMRSFGNFHNEVIPVLHNYFHACALKMSCVELAKTFSYLANKGVSVVTGETVITPTQSKQTNALLATCGLYDGAGEFAYRVGMPGKSGVGGGIIAVVPGEMTIAVWSPALDQSGNSLAGTRALELLAQRIGRSIF.

Positions 64, 115, 159, 166, 190, 242, and 260 each coordinate substrate.

This sequence belongs to the glutaminase family. As to quaternary structure, homotetramer.

It catalyses the reaction L-glutamine + H2O = L-glutamate + NH4(+). The protein is Glutaminase of Vibrio cholerae serotype O1 (strain ATCC 39315 / El Tor Inaba N16961).